A 367-amino-acid chain; its full sequence is MGLIMVFSSSIALGDGPKYVNAGRYYFFSRQLIFILIGLFAMAFTFLMPMKFWDSKAFWGYCICFLLLALVLVPGIGREVNYAYRWIPIGPFNFQPSEFAKLTMIVFTSAYTVRKQKSIHGLKGFLPIIIYLGIICFLLINEPDLGATMVVVAIVMSILLLGGLGFALFSLLFLSAVLLVIAAILTAPWRMQRFFAYLDPFSQEHAQNTGYQLTHSLIAVGRGGFFGEGLGLSIEKLHYLPEAHTDFIMAVVGEELGFVGIFFVILLFVLLVRKGLNVGRQAIAMDRLFNGLVAQGVVVWFGVQAIVNLGVCFGVFPTKGLTLPFISYGGSSIVISLMAFGLLLRVDYENRCLMRGQKPLGIGASYA.

9 consecutive transmembrane segments (helical) span residues 32-52, 57-77, 87-107, 119-139, 149-169, 171-191, 251-271, 296-316, and 323-343; these read LIFI…PMKF, AFWG…PGIG, IPIG…MIVF, IHGL…CFLL, MVVV…FALF, LLFL…PWRM, VVGE…FVLL, GVVV…FGVF, and LPFI…FGLL.

It belongs to the SEDS family. FtsW subfamily.

It is found in the cell inner membrane. The enzyme catalyses [GlcNAc-(1-&gt;4)-Mur2Ac(oyl-L-Ala-gamma-D-Glu-L-Lys-D-Ala-D-Ala)](n)-di-trans,octa-cis-undecaprenyl diphosphate + beta-D-GlcNAc-(1-&gt;4)-Mur2Ac(oyl-L-Ala-gamma-D-Glu-L-Lys-D-Ala-D-Ala)-di-trans,octa-cis-undecaprenyl diphosphate = [GlcNAc-(1-&gt;4)-Mur2Ac(oyl-L-Ala-gamma-D-Glu-L-Lys-D-Ala-D-Ala)](n+1)-di-trans,octa-cis-undecaprenyl diphosphate + di-trans,octa-cis-undecaprenyl diphosphate + H(+). It functions in the pathway cell wall biogenesis; peptidoglycan biosynthesis. In terms of biological role, peptidoglycan polymerase that is essential for cell division. The protein is Probable peptidoglycan glycosyltransferase FtsW of Taylorella equigenitalis (strain MCE9).